A 246-amino-acid chain; its full sequence is Probable transcriptional regulatory protein Pden_1905 (246 aa).

Positions 1 to 21 (MAGHSKWANIQHRKGKQDKLR) are disordered.

This sequence belongs to the TACO1 family.

It localises to the cytoplasm. This is Probable transcriptional regulatory protein Pden_1905 from Paracoccus denitrificans (strain Pd 1222).